The following is a 162-amino-acid chain: Large ribosomal subunit protein uL10 (162 aa).

The protein belongs to the universal ribosomal protein uL10 family. As to quaternary structure, part of the ribosomal stalk of the 50S ribosomal subunit. The N-terminus interacts with L11 and the large rRNA to form the base of the stalk. The C-terminus forms an elongated spine to which L12 dimers bind in a sequential fashion forming a multimeric L10(L12)X complex.

Functionally, forms part of the ribosomal stalk, playing a central role in the interaction of the ribosome with GTP-bound translation factors. This Acholeplasma laidlawii (strain PG-8A) protein is Large ribosomal subunit protein uL10.